A 79-amino-acid polypeptide reads, in one-letter code: Acyl carrier protein (79 aa).

One can recognise a Carrier domain in the interval 2–77 (SDIEARVKKI…LAIDYAKSHA (76 aa)). Residue Ser37 is modified to O-(pantetheine 4'-phosphoryl)serine.

The protein belongs to the acyl carrier protein (ACP) family. 4'-phosphopantetheine is transferred from CoA to a specific serine of apo-ACP by AcpS. This modification is essential for activity because fatty acids are bound in thioester linkage to the sulfhydryl of the prosthetic group.

The protein localises to the cytoplasm. The protein operates within lipid metabolism; fatty acid biosynthesis. In terms of biological role, carrier of the growing fatty acid chain in fatty acid biosynthesis. In Methylibium petroleiphilum (strain ATCC BAA-1232 / LMG 22953 / PM1), this protein is Acyl carrier protein.